The primary structure comprises 527 residues: Bifunctional purine biosynthesis protein PurH (527 aa).

Residues 8–156 (AGAKRPIRRA…KNHPSVAVVV (149 aa)) form the MGS-like domain.

It belongs to the PurH family.

The catalysed reaction is (6R)-10-formyltetrahydrofolate + 5-amino-1-(5-phospho-beta-D-ribosyl)imidazole-4-carboxamide = 5-formamido-1-(5-phospho-D-ribosyl)imidazole-4-carboxamide + (6S)-5,6,7,8-tetrahydrofolate. It carries out the reaction IMP + H2O = 5-formamido-1-(5-phospho-D-ribosyl)imidazole-4-carboxamide. It functions in the pathway purine metabolism; IMP biosynthesis via de novo pathway; 5-formamido-1-(5-phospho-D-ribosyl)imidazole-4-carboxamide from 5-amino-1-(5-phospho-D-ribosyl)imidazole-4-carboxamide (10-formyl THF route): step 1/1. The protein operates within purine metabolism; IMP biosynthesis via de novo pathway; IMP from 5-formamido-1-(5-phospho-D-ribosyl)imidazole-4-carboxamide: step 1/1. This is Bifunctional purine biosynthesis protein PurH from Mycobacterium sp. (strain JLS).